A 642-amino-acid chain; its full sequence is Fork head protein homolog 2 (642 aa).

The disordered stretch occupies residues 1–23 (MTVRRLESKSEHISDDEERKEQL). The FHA domain maps to 96 to 160 (IILGREPANP…NGIKVDGKLF (65 aa)). The fork-head DNA-binding region spans 223–318 (KPPYSYSVMI…AKTRKTPRKR (96 aa)). Residues 310 to 319 (KTRKTPRKRS) show a composition bias toward basic residues. Disordered regions lie at residues 310–392 (KTRK…ETYK), 519–574 (VSDS…TEEN), and 586–642 (ATME…KSSA). 5 positions are modified to phosphoserine: serine 319, serine 321, serine 322, serine 334, and serine 336. Over residues 348–362 (TSIPAAEPASSTTSA) the composition is skewed to low complexity. Composition is skewed to polar residues over residues 363-381 (RDQT…TAET), 519-552 (VSDS…SANK), and 599-642 (TPTS…KSSA). Residues serine 375, serine 535, and serine 626 each carry the phosphoserine modification.

In terms of processing, phosphorylated. Occurs periodically during mitosis.

The protein localises to the nucleus. Required for promoter sequence element PCB-driven, M-phase-specific transcription. Acts as a transcriptional activator with a role in the regulation of mitosis. Binds, cooperatively with mcm1, the CLB cluster regulatory elements throughout the cell cycle. Regulates the periodic transcription of cdc15 and spo12. Required for the correct timing, positioning and contraction of the division septum. The polypeptide is Fork head protein homolog 2 (fkh2) (Schizosaccharomyces pombe (strain 972 / ATCC 24843) (Fission yeast)).